Here is a 205-residue protein sequence, read N- to C-terminus: Hydrogenase-4 component A (205 aa).

4 4Fe-4S ferredoxin-type domains span residues 2–31 (NRFVVAEPLWCTGCNTCLAACSDVHKTQGL), 41–72 (KTSTITAPVVCHHCEEAPCLQVCPVNAISQRD), 73–102 (DAIQLNESLCIGCKLCAVVCPFGAISASGS), and 140–172 (QTVAVKCDLCDFLPEGPACVRACPNQALRLITG). 16 residues coordinate [4Fe-4S] cluster: cysteine 12, cysteine 15, cysteine 18, cysteine 22, cysteine 51, cysteine 54, cysteine 59, cysteine 63, cysteine 82, cysteine 85, cysteine 88, cysteine 92, cysteine 146, cysteine 149, cysteine 158, and cysteine 162.

Requires [4Fe-4S] cluster as cofactor.

In terms of biological role, probable electron transfer protein for hydrogenase 4. This Escherichia coli (strain K12) protein is Hydrogenase-4 component A.